An 89-amino-acid polypeptide reads, in one-letter code: Small ribosomal subunit protein uS15 (89 aa).

The protein belongs to the universal ribosomal protein uS15 family. In terms of assembly, part of the 30S ribosomal subunit. Forms a bridge to the 50S subunit in the 70S ribosome, contacting the 23S rRNA.

One of the primary rRNA binding proteins, it binds directly to 16S rRNA where it helps nucleate assembly of the platform of the 30S subunit by binding and bridging several RNA helices of the 16S rRNA. Functionally, forms an intersubunit bridge (bridge B4) with the 23S rRNA of the 50S subunit in the ribosome. This chain is Small ribosomal subunit protein uS15, found in Pelotomaculum thermopropionicum (strain DSM 13744 / JCM 10971 / SI).